Reading from the N-terminus, the 614-residue chain is DNA mismatch repair protein MutL (614 aa).

The segment at 355 to 411 is disordered; that stretch reads PLSTGRVSEADPSNYATQSKFDEKPRESGSQGQSSSISAPSSYSRGGEYSARSQPEL. A compositionally biased stretch (low complexity) spans 382 to 401; the sequence is SGSQGQSSSISAPSSYSRGG.

Belongs to the DNA mismatch repair MutL/HexB family.

In terms of biological role, this protein is involved in the repair of mismatches in DNA. It is required for dam-dependent methyl-directed DNA mismatch repair. May act as a 'molecular matchmaker', a protein that promotes the formation of a stable complex between two or more DNA-binding proteins in an ATP-dependent manner without itself being part of a final effector complex. The polypeptide is DNA mismatch repair protein MutL (Shewanella woodyi (strain ATCC 51908 / MS32)).